A 304-amino-acid polypeptide reads, in one-letter code: Developmental pluripotency-associated protein 4 (304 aa).

Positions 1-11 (MLRGSASSTSM) are enriched in polar residues. 2 disordered regions span residues 1–84 (MLRG…IPPL) and 147–176 (KKLK…VGEP). The span at 12-29 (EKAKGKEWTSTEKSREED) shows a compositional bias: basic and acidic residues. Position 215 is a phosphothreonine (Thr-215). Phosphoserine occurs at positions 221 and 226.

In terms of assembly, interacts with DPPA2. Interacts with PCGF1.

Its subcellular location is the nucleus. In terms of biological role, may be involved in the maintenance of active epigenetic status of target genes. May inhibit differentiation of embryonic cells into a primitive ectoderm lineage. The protein is Developmental pluripotency-associated protein 4 (DPPA4) of Homo sapiens (Human).